The chain runs to 308 residues: 34.2 kDa protein in rubredoxin operon (308 aa).

Cys136 and Cys139 form a disulfide bridge. FAD is bound at residue Thr268–Asp278.

It belongs to the class-II pyridine nucleotide-disulfide oxidoreductase family.

This chain is 34.2 kDa protein in rubredoxin operon, found in Clostridium pasteurianum.